Consider the following 142-residue polypeptide: Small ribosomal subunit protein uS12 (142 aa).

The interval 1 to 44 is disordered; that stretch reads MTNGKYAARKLKKDRQQRRWSDSEYARRERGLGKKSDPLEGAPQ. Residues 7–16 show a composition bias toward basic residues; it reads AARKLKKDRQ. The segment covering 17–38 has biased composition (basic and acidic residues); that stretch reads QRRWSDSEYARRERGLGKKSDP.

It belongs to the universal ribosomal protein uS12 family. In terms of assembly, part of the 30S ribosomal subunit.

Functionally, with S4 and S5 plays an important role in translational accuracy. Located at the interface of the 30S and 50S subunits. The polypeptide is Small ribosomal subunit protein uS12 (Halobacterium salinarum (strain ATCC 29341 / DSM 671 / R1)).